Here is a 148-residue protein sequence, read N- to C-terminus: Large ribosomal subunit protein bL19 (148 aa).

This sequence belongs to the bacterial ribosomal protein bL19 family.

Functionally, this protein is located at the 30S-50S ribosomal subunit interface and may play a role in the structure and function of the aminoacyl-tRNA binding site. This is Large ribosomal subunit protein bL19 from Beijerinckia indica subsp. indica (strain ATCC 9039 / DSM 1715 / NCIMB 8712).